Reading from the N-terminus, the 84-residue chain is U-actitoxin-Avd8e (84 aa).

An N-terminal signal peptide occupies residues 1–22 (MASARTLVLLLIGAVLMCQVSA). Positions 23–41 (DSELLNEILAAHMEEDMPE) are excised as a propeptide. The ShKT domain occupies 44–84 (CIDRYRSNICGSVIRPLDCTRRKSRMGRFARTNCKKLCGFC). 3 disulfide bridges follow: C44–C84, C53–C77, and C62–C81.

It belongs to the sea anemone 8 toxin family.

The protein resides in the secreted. It is found in the nematocyst. The polypeptide is U-actitoxin-Avd8e (Anemonia viridis (Snakelocks anemone)).